The primary structure comprises 408 residues: ATP phosphoribosyltransferase regulatory subunit (408 aa).

The protein belongs to the class-II aminoacyl-tRNA synthetase family. HisZ subfamily. As to quaternary structure, heteromultimer composed of HisG and HisZ subunits.

The protein localises to the cytoplasm. It participates in amino-acid biosynthesis; L-histidine biosynthesis; L-histidine from 5-phospho-alpha-D-ribose 1-diphosphate: step 1/9. Its function is as follows. Required for the first step of histidine biosynthesis. May allow the feedback regulation of ATP phosphoribosyltransferase activity by histidine. In Gloeothece citriformis (strain PCC 7424) (Cyanothece sp. (strain PCC 7424)), this protein is ATP phosphoribosyltransferase regulatory subunit.